Here is a 411-residue protein sequence, read N- to C-terminus: Dual-specificity RNA methyltransferase RlmN (411 aa).

The active-site Proton acceptor is glutamate 124. Residues 130 to 379 (EEGRGTLCIS…IRTPRGRDIL (250 aa)) enclose the Radical SAM core domain. Cysteine 137 and cysteine 382 are joined by a disulfide. Positions 144, 148, and 151 each coordinate [4Fe-4S] cluster. S-adenosyl-L-methionine is bound by residues 208–209 (GE), serine 240, 262–264 (SLH), and asparagine 339. Cysteine 382 functions as the S-methylcysteine intermediate in the catalytic mechanism.

Belongs to the radical SAM superfamily. RlmN family. [4Fe-4S] cluster is required as a cofactor.

It localises to the cytoplasm. The enzyme catalyses adenosine(2503) in 23S rRNA + 2 reduced [2Fe-2S]-[ferredoxin] + 2 S-adenosyl-L-methionine = 2-methyladenosine(2503) in 23S rRNA + 5'-deoxyadenosine + L-methionine + 2 oxidized [2Fe-2S]-[ferredoxin] + S-adenosyl-L-homocysteine. The catalysed reaction is adenosine(37) in tRNA + 2 reduced [2Fe-2S]-[ferredoxin] + 2 S-adenosyl-L-methionine = 2-methyladenosine(37) in tRNA + 5'-deoxyadenosine + L-methionine + 2 oxidized [2Fe-2S]-[ferredoxin] + S-adenosyl-L-homocysteine. In terms of biological role, specifically methylates position 2 of adenine 2503 in 23S rRNA and position 2 of adenine 37 in tRNAs. m2A2503 modification seems to play a crucial role in the proofreading step occurring at the peptidyl transferase center and thus would serve to optimize ribosomal fidelity. This is Dual-specificity RNA methyltransferase RlmN from Rhizobium meliloti (strain 1021) (Ensifer meliloti).